We begin with the raw amino-acid sequence, 470 residues long: ATP synthase subunit beta (470 aa).

158–165 (GGAGVGKT) provides a ligand contact to ATP.

The protein belongs to the ATPase alpha/beta chains family. In terms of assembly, F-type ATPases have 2 components, CF(1) - the catalytic core - and CF(0) - the membrane proton channel. CF(1) has five subunits: alpha(3), beta(3), gamma(1), delta(1), epsilon(1). CF(0) has three main subunits: a(1), b(2) and c(9-12). The alpha and beta chains form an alternating ring which encloses part of the gamma chain. CF(1) is attached to CF(0) by a central stalk formed by the gamma and epsilon chains, while a peripheral stalk is formed by the delta and b chains.

It localises to the cell membrane. It carries out the reaction ATP + H2O + 4 H(+)(in) = ADP + phosphate + 5 H(+)(out). Functionally, produces ATP from ADP in the presence of a proton gradient across the membrane. The catalytic sites are hosted primarily by the beta subunits. The sequence is that of ATP synthase subunit beta from Halalkalibacterium halodurans (strain ATCC BAA-125 / DSM 18197 / FERM 7344 / JCM 9153 / C-125) (Bacillus halodurans).